We begin with the raw amino-acid sequence, 215 residues long: Thiamine-phosphate synthase (215 aa).

4-amino-2-methyl-5-(diphosphooxymethyl)pyrimidine is bound by residues 37-41 (QLRIK) and asparagine 69. Residues aspartate 70 and aspartate 89 each contribute to the Mg(2+) site. Position 108 (serine 108) interacts with 4-amino-2-methyl-5-(diphosphooxymethyl)pyrimidine. Residue 134–136 (TQT) participates in 2-[(2R,5Z)-2-carboxy-4-methylthiazol-5(2H)-ylidene]ethyl phosphate binding. Position 137 (lysine 137) interacts with 4-amino-2-methyl-5-(diphosphooxymethyl)pyrimidine. 2-[(2R,5Z)-2-carboxy-4-methylthiazol-5(2H)-ylidene]ethyl phosphate contacts are provided by residues glycine 166 and 186–187 (VS).

Belongs to the thiamine-phosphate synthase family. Mg(2+) serves as cofactor.

It catalyses the reaction 2-[(2R,5Z)-2-carboxy-4-methylthiazol-5(2H)-ylidene]ethyl phosphate + 4-amino-2-methyl-5-(diphosphooxymethyl)pyrimidine + 2 H(+) = thiamine phosphate + CO2 + diphosphate. The enzyme catalyses 2-(2-carboxy-4-methylthiazol-5-yl)ethyl phosphate + 4-amino-2-methyl-5-(diphosphooxymethyl)pyrimidine + 2 H(+) = thiamine phosphate + CO2 + diphosphate. The catalysed reaction is 4-methyl-5-(2-phosphooxyethyl)-thiazole + 4-amino-2-methyl-5-(diphosphooxymethyl)pyrimidine + H(+) = thiamine phosphate + diphosphate. It participates in cofactor biosynthesis; thiamine diphosphate biosynthesis; thiamine phosphate from 4-amino-2-methyl-5-diphosphomethylpyrimidine and 4-methyl-5-(2-phosphoethyl)-thiazole: step 1/1. In terms of biological role, condenses 4-methyl-5-(beta-hydroxyethyl)thiazole monophosphate (THZ-P) and 2-methyl-4-amino-5-hydroxymethyl pyrimidine pyrophosphate (HMP-PP) to form thiamine monophosphate (TMP). This Yersinia pestis (strain Pestoides F) protein is Thiamine-phosphate synthase.